A 359-amino-acid chain; its full sequence is MRQIMIAVAIAVAVSILLTPALIRLFTKQGFGHQIREDGPPSHHSKRGTPSMGGVAILAGIWAGYFGTHLAGLAFDGEGITASGLLVLGLATSLGGVGFLDDMIKLRRSRNLGLNKTAKTVGQITSAVLFAVLVLQFRNPAGLAPASAELSYVREIATVTLTPALFVLFCVLVVSAWSNAVNFTDGLDGLAAGCMAMVTGAYVLITFWQDHNACVTAPGLGCYNVRDPLDLALIAAATAGACIGFLWWNAAPAKIFMGDTGSLALGGIIAGLSVTSRTEILAVVLGALFVAEITSVVLQILTFRTTGRRVFRMAPFHHHFELVGWAETTVIIRFWLLTAITCGLGVALFYGEWLAAIGA.

10 helical membrane-spanning segments follow: residues 3–23 (QIMI…PALI), 55–75 (VAIL…GLAF), 80–100 (ITAS…VGFL), 117–137 (TAKT…VLQF), 156–176 (IATV…VVSA), 187–207 (LDGL…LITF), 231–251 (LALI…WNAA), 255–275 (IFMG…LSVT), 280–300 (ILAV…VLQI), and 334–354 (FWLL…GEWL).

The protein belongs to the glycosyltransferase 4 family. MraY subfamily. It depends on Mg(2+) as a cofactor.

Its subcellular location is the cell membrane. It catalyses the reaction UDP-N-acetyl-alpha-D-muramoyl-L-alanyl-gamma-D-glutamyl-meso-2,6-diaminopimeloyl-D-alanyl-D-alanine + di-trans,octa-cis-undecaprenyl phosphate = di-trans,octa-cis-undecaprenyl diphospho-N-acetyl-alpha-D-muramoyl-L-alanyl-D-glutamyl-meso-2,6-diaminopimeloyl-D-alanyl-D-alanine + UMP. It participates in cell wall biogenesis; peptidoglycan biosynthesis. Catalyzes the initial step of the lipid cycle reactions in the biosynthesis of the cell wall peptidoglycan: transfers peptidoglycan precursor phospho-MurNAc-pentapeptide from UDP-MurNAc-pentapeptide onto the lipid carrier undecaprenyl phosphate, yielding undecaprenyl-pyrophosphoryl-MurNAc-pentapeptide, known as lipid I. This is Phospho-N-acetylmuramoyl-pentapeptide-transferase from Mycobacterium ulcerans (strain Agy99).